Here is a 252-residue protein sequence, read N- to C-terminus: NLP effector protein Pc118356 (252 aa).

An N-terminal signal peptide occupies residues methionine 1–glycine 17. N-linked (GlcNAc...) asparagine glycans are attached at residues asparagine 20 and asparagine 67. The Hepta-peptide GHRHDWE motif signature appears at glutamine 121 to glutamate 127. N-linked (GlcNAc...) asparagine glycosylation is present at asparagine 166.

It belongs to the Necrosis inducing protein (NPP1) family.

It localises to the secreted. In terms of biological role, secreted effector that contributes strongly to virulence during infection by P.capsici. The sequence is that of NLP effector protein Pc118356 from Phytophthora capsici.